The chain runs to 368 residues: Multifunctional CCA protein (368 aa).

Residues Gly8 and Arg11 each coordinate ATP. The CTP site is built by Gly8 and Arg11. 2 residues coordinate Mg(2+): Asp21 and Asp23. Arg91, Arg137, and Arg140 together coordinate ATP. 3 residues coordinate CTP: Arg91, Arg137, and Arg140.

This sequence belongs to the tRNA nucleotidyltransferase/poly(A) polymerase family. Bacterial CCA-adding enzyme type 1 subfamily. As to quaternary structure, monomer. Can also form homodimers and oligomers. The cofactor is Mg(2+). Ni(2+) serves as cofactor.

It carries out the reaction a tRNA precursor + 2 CTP + ATP = a tRNA with a 3' CCA end + 3 diphosphate. It catalyses the reaction a tRNA with a 3' CCA end + 2 CTP + ATP = a tRNA with a 3' CCACCA end + 3 diphosphate. In terms of biological role, catalyzes the addition and repair of the essential 3'-terminal CCA sequence in tRNAs without using a nucleic acid template. Adds these three nucleotides in the order of C, C, and A to the tRNA nucleotide-73, using CTP and ATP as substrates and producing inorganic pyrophosphate. tRNA 3'-terminal CCA addition is required both for tRNA processing and repair. Also involved in tRNA surveillance by mediating tandem CCA addition to generate a CCACCA at the 3' terminus of unstable tRNAs. While stable tRNAs receive only 3'-terminal CCA, unstable tRNAs are marked with CCACCA and rapidly degraded. The polypeptide is Multifunctional CCA protein (Pseudomonas putida (strain ATCC 47054 / DSM 6125 / CFBP 8728 / NCIMB 11950 / KT2440)).